We begin with the raw amino-acid sequence, 68 residues long: Alpha/kappa-conotoxin-like pl14.2 (68 aa).

The signal sequence occupies residues 1–27; that stretch reads MPSVRSVTCCCLLWMMFSVQLVTPGSP. Positions 28 to 39 are excised as a propeptide; it reads ATAQLSGQRTAR. 2 disulfides stabilise this stretch: Cys-46/Cys-61 and Cys-50/Cys-63. Arg-64 bears the Arginine amide mark. The propeptide occupies 65 to 68; that stretch reads GKRD.

Belongs to the conotoxin J superfamily. In terms of tissue distribution, expressed by the venom duct.

The protein resides in the secreted. In terms of biological role, highly inhibits both nicotinic acetylcholine receptors (neuronal (alpha-3/beta-4) and muscular (alpha-1/beta-1/epsilon/delta) subtypes) and the voltage-gated potassium channel Kv1.6/KCNA6 subtype. The polypeptide is Alpha/kappa-conotoxin-like pl14.2 (Conus planorbis (Planorbis cone)).